A 258-amino-acid chain; its full sequence is Global transcriptional regulator CodY (258 aa).

A GAF domain region spans residues 1-156; sequence MSSLLSKTRR…SATIVGMEML (156 aa). Positions 204–223 form a DNA-binding region, H-T-H motif; it reads ASKIADKVGITRSVIVNALR.

Belongs to the CodY family.

The protein resides in the cytoplasm. Its function is as follows. DNA-binding global transcriptional regulator which is involved in the adaptive response to starvation and acts by directly or indirectly controlling the expression of numerous genes in response to nutrient availability. During rapid exponential growth, CodY is highly active and represses genes whose products allow adaptation to nutrient depletion. The polypeptide is Global transcriptional regulator CodY (Clostridium botulinum (strain Alaska E43 / Type E3)).